A 205-amino-acid chain; its full sequence is Probable GTP-binding protein EngB (205 aa).

An EngB-type G domain is found at 22–198 (HLPEYAFIGR…LSYIDEVNQD (177 aa)). Residues 30–37 (GRSNVGKS), 57–61 (GKTQL), 75–78 (DLPG), 142–145 (TKAD), and 177–179 (TSA) contribute to the GTP site. Residues serine 37 and threonine 59 each contribute to the Mg(2+) site.

This sequence belongs to the TRAFAC class TrmE-Era-EngA-EngB-Septin-like GTPase superfamily. EngB GTPase family. The cofactor is Mg(2+).

Its function is as follows. Necessary for normal cell division and for the maintenance of normal septation. The chain is Probable GTP-binding protein EngB from Flavobacterium psychrophilum (strain ATCC 49511 / DSM 21280 / CIP 103535 / JIP02/86).